A 182-amino-acid polypeptide reads, in one-letter code: MSDNLALHGTTILCLKKNEEIIIAADGQVSHGNTVLKSTARKLRTIANNKIIAGFAGSTADGLALFEKLEVKIEQHKHNLLRSAVELAKDWRSDKYLRRLEAMMIVADRNHILILTGNGDVVEPENNVAAIGSGGLFALSAARALMSYDNPLTAEEIALKSMNIAADLCVFSNHNIITEKVV.

The active site involves Thr-10. Residues Ala-166, Cys-169, and Ser-172 each contribute to the Na(+) site.

The protein belongs to the peptidase T1B family. HslV subfamily. In terms of assembly, a double ring-shaped homohexamer of HslV is capped on each side by a ring-shaped HslU homohexamer. The assembly of the HslU/HslV complex is dependent on binding of ATP.

Its subcellular location is the cytoplasm. The enzyme catalyses ATP-dependent cleavage of peptide bonds with broad specificity.. Its activity is regulated as follows. Allosterically activated by HslU binding. In terms of biological role, protease subunit of a proteasome-like degradation complex believed to be a general protein degrading machinery. This chain is ATP-dependent protease subunit HslV, found in Rickettsia bellii (strain OSU 85-389).